A 165-amino-acid polypeptide reads, in one-letter code: Putative pre-16S rRNA nuclease (165 aa).

Belongs to the YqgF nuclease family.

The protein resides in the cytoplasm. Its function is as follows. Could be a nuclease involved in processing of the 5'-end of pre-16S rRNA. This Brucella anthropi (strain ATCC 49188 / DSM 6882 / CCUG 24695 / JCM 21032 / LMG 3331 / NBRC 15819 / NCTC 12168 / Alc 37) (Ochrobactrum anthropi) protein is Putative pre-16S rRNA nuclease.